Consider the following 344-residue polypeptide: L-rhamnose-proton symporter (344 aa).

Transmembrane regions (helical) follow at residues 4–24, 38–58, 68–88, 101–121, 137–157, 175–195, 214–234, 259–279, 290–310, and 321–341; these read AITM…CFYA, WSVG…ALLL, FNLS…IGNI, MGIG…TPII, TLLG…AGQL, LLLA…MNAA, LPSY…FCFI, ILLS…YAWG, MSWM…GLVL, and VAVL…VGLG.

The protein belongs to the L-rhamnose transporter (TC 2.A.7.6) family.

The protein resides in the cell inner membrane. It carries out the reaction L-rhamnopyranose(in) + H(+)(in) = L-rhamnopyranose(out) + H(+)(out). Uptake of L-rhamnose across the cytoplasmic membrane with the concomitant transport of protons into the cell (symport system). The sequence is that of L-rhamnose-proton symporter from Salmonella agona (strain SL483).